Consider the following 428-residue polypeptide: Adenylosuccinate synthetase (428 aa).

GTP-binding positions include 12-18 (GDEGKGK) and 40-42 (GHT). Asp13 functions as the Proton acceptor in the catalytic mechanism. 2 residues coordinate Mg(2+): Asp13 and Gly40. Residues 13–16 (DEGK), 38–41 (NAGH), Thr130, Arg144, Gln225, Thr240, and Arg304 each bind IMP. Residue His41 is the Proton donor of the active site. Residue 300–306 (VTTGRAR) coordinates substrate. GTP contacts are provided by residues Arg306, 332-334 (KID), and 414-416 (SVG).

It belongs to the adenylosuccinate synthetase family. As to quaternary structure, homodimer. The cofactor is Mg(2+).

It is found in the cytoplasm. The enzyme catalyses IMP + L-aspartate + GTP = N(6)-(1,2-dicarboxyethyl)-AMP + GDP + phosphate + 2 H(+). The protein operates within purine metabolism; AMP biosynthesis via de novo pathway; AMP from IMP: step 1/2. Its function is as follows. Plays an important role in the de novo pathway of purine nucleotide biosynthesis. Catalyzes the first committed step in the biosynthesis of AMP from IMP. This chain is Adenylosuccinate synthetase, found in Clostridium botulinum (strain 657 / Type Ba4).